We begin with the raw amino-acid sequence, 547 residues long: Chaperonin GroEL (547 aa).

ATP contacts are provided by residues Thr-29–Pro-32, Lys-50, Asp-86–Thr-90, Gly-414, and Asp-495. The interval Pro-525–Phe-547 is disordered. A compositionally biased stretch (gly residues) spans Gly-537–Phe-547.

This sequence belongs to the chaperonin (HSP60) family. As to quaternary structure, forms a cylinder of 14 subunits composed of two heptameric rings stacked back-to-back. Interacts with the co-chaperonin GroES.

The protein resides in the cytoplasm. The enzyme catalyses ATP + H2O + a folded polypeptide = ADP + phosphate + an unfolded polypeptide.. Together with its co-chaperonin GroES, plays an essential role in assisting protein folding. The GroEL-GroES system forms a nano-cage that allows encapsulation of the non-native substrate proteins and provides a physical environment optimized to promote and accelerate protein folding. This is Chaperonin GroEL from Rickettsia felis (strain ATCC VR-1525 / URRWXCal2) (Rickettsia azadi).